The primary structure comprises 455 residues: Mu-like prophage FluMu DNA circularization protein (455 aa).

The segment at residues Val-368–Tyr-387 is a DNA-binding region (H-T-H motif).

This sequence to phage Mu protein N.

The protein is Mu-like prophage FluMu DNA circularization protein of Haemophilus influenzae (strain ATCC 51907 / DSM 11121 / KW20 / Rd).